The primary structure comprises 416 residues: Enolase (416 aa).

Gln-160 contributes to the (2R)-2-phosphoglycerate binding site. The Proton donor role is filled by Glu-204. Positions 239, 282, and 308 each coordinate Mg(2+). 4 residues coordinate (2R)-2-phosphoglycerate: Lys-333, Arg-362, Ser-363, and Lys-384. Residue Lys-333 is the Proton acceptor of the active site.

The protein belongs to the enolase family. It depends on Mg(2+) as a cofactor.

The protein localises to the cytoplasm. Its subcellular location is the secreted. It is found in the cell surface. The catalysed reaction is (2R)-2-phosphoglycerate = phosphoenolpyruvate + H2O. It participates in carbohydrate degradation; glycolysis; pyruvate from D-glyceraldehyde 3-phosphate: step 4/5. Catalyzes the reversible conversion of 2-phosphoglycerate (2-PG) into phosphoenolpyruvate (PEP). It is essential for the degradation of carbohydrates via glycolysis. This is Enolase from Metallosphaera sedula (strain ATCC 51363 / DSM 5348 / JCM 9185 / NBRC 15509 / TH2).